The sequence spans 696 residues: Mitosis initiation protein fs(1)Ya (696 aa).

Disordered stretches follow at residues 245-285, 336-379, and 457-492; these read NAST…RAWK, EHSS…YSTS, and IKFETPPKSSQQMRSNGEGDETKDQFFTPEPGTPEI. Composition is skewed to low complexity over residues 270–281 and 361–379; these read QQQQQQQQPLQQ and SESSASEVNSGSSSSYSTS. A rich in charged AA region spans residues 448–696; sequence TGAGINKKQI…REPIERMRRQ (249 aa). Thr-478, Thr-484, and Thr-489 each carry phosphothreonine. Short sequence motifs (nuclear localization signal) lie at residues 512–520 and 534–538; these read PKKDKPKEK and QPRVR. Disordered stretches follow at residues 555–586 and 603–696; these read DVGEPEVVDAEEEDEVFRPTNASTCNDKKLEA and PASL…MRRQ. Over residues 557–569 the composition is skewed to acidic residues; sequence GEPEVVDAEEEDE. Basic and acidic residues-rich tracts occupy residues 607–624 and 685–696; these read RGEREKDRDRDRDSDKEN and RPREPIERMRRQ.

The protein resides in the nucleus envelope. Its subcellular location is the nucleus. The protein localises to the nucleoplasm. It is found in the cytoplasm. Functionally, cell cycle-dependent nuclear envelope component required for embryonic mitosis. The chain is Mitosis initiation protein fs(1)Ya (fs(1)Ya) from Drosophila melanogaster (Fruit fly).